Reading from the N-terminus, the 299-residue chain is Epimerase family protein SERP0438 (299 aa).

Belongs to the NAD(P)-dependent epimerase/dehydratase family. SDR39U1 subfamily.

The sequence is that of Epimerase family protein SERP0438 from Staphylococcus epidermidis (strain ATCC 35984 / DSM 28319 / BCRC 17069 / CCUG 31568 / BM 3577 / RP62A).